The primary structure comprises 163 residues: DNA polymerase epsilon subunit D (163 aa).

2 disordered regions span residues Met1–Asn22 and Arg126–Glu163. Basic and acidic residues-rich tracts occupy residues Arg126 to Ser142 and Glu154 to Glu163.

As to quaternary structure, heterotetramer. Consists of four subunits: POL2, DPB2, DPB3 and DPB4.

The protein resides in the nucleus. Functionally, as accessory component of the DNA polymerase epsilon (DNA polymerase II) participates in chromosomal DNA replication. The sequence is that of DNA polymerase epsilon subunit D (DPB4) from Yarrowia lipolytica (strain CLIB 122 / E 150) (Yeast).